Reading from the N-terminus, the 289-residue chain is Inorganic pyrophosphatase (289 aa).

Ser-2 carries the post-translational modification N-acetylserine. Residue Lys-57 is modified to N6-acetyllysine. Mg(2+) contacts are provided by Asp-116, Asp-121, and Asp-153. Lys-228 is subject to N6-acetyllysine. A Phosphoserine modification is found at Ser-250.

Belongs to the PPase family. Homodimer. Mg(2+) is required as a cofactor.

It is found in the cytoplasm. It catalyses the reaction diphosphate + H2O = 2 phosphate + H(+). In Pongo abelii (Sumatran orangutan), this protein is Inorganic pyrophosphatase (PPA1).